A 406-amino-acid polypeptide reads, in one-letter code: MIEYQIPVSFKDVVVGFTQEEWHRLSPAQRALYRDVMLETYSNLVSVGYEGTKPDVILRLEQEEAPWIGEAACPGCHCWEDIWRVNIQRKRRQDMLLRPGAAISKKTLPKEKSCEYNKFGKISLLSTDLFSSIQSPSNWNPCGKNLNHNLDLIGFKRNCAKKQDECYAYGKLLQRINHGRRPNGEKPRGCSHCEKAFTQNPALMYKPAVSDSLLYKRKRVPPTEKPHVCSECGKAFCYKSEFIRHQRSHTGEKPYGCTDCGKAFSHKSTLIKHQRIHTGVRPFECFFCGKAFTQKSHRTEHQRTHTGERPFVCSECGKSFGEKSYLNVHRKMHTGERPYRCRECGKSFSQKSCLNKHWRTHTGEKPYGCNECGKAFYQKPNLSRHQKIHARKNAYRNENLIIVGNT.

A KRAB domain is found at 8–79; that stretch reads VSFKDVVVGF…EAACPGCHCW (72 aa). 6 consecutive C2H2-type zinc fingers follow at residues 227–249, 255–277, 283–305, 311–333, 339–361, and 367–389; these read HVCS…QRSH, YGCT…QRIH, FECF…QRTH, FVCS…RKMH, YRCR…WRTH, and YGCN…QKIH.

It belongs to the krueppel C2H2-type zinc-finger protein family.

The protein resides in the nucleus. May be involved in transcriptional regulation. This chain is Zinc finger protein 793 (ZNF793), found in Homo sapiens (Human).